The following is a 191-amino-acid chain: MNTELKILMAGVDEVGRGPLAGAVVTAAVILKKPIDGLTDSKKLSPKQRNLLAIRIKEEALAFAYGRAEVEEIDQLNIHHATLLAMRRAVEALPIQPDNVVVDGAFTPQLNIPCKAIVQGDSLIPEISAASILAKVLRDEEMVALDKIYPGYGFAEHKGYATPVHKEALMRLGPCKIHRRSYSPVADLISK.

The 185-residue stretch at 7-191 folds into the RNase H type-2 domain; that stretch reads ILMAGVDEVG…YSPVADLISK (185 aa). Positions 13, 14, and 103 each coordinate a divalent metal cation.

Belongs to the RNase HII family. The cofactor is Mn(2+). Requires Mg(2+) as cofactor.

It is found in the cytoplasm. The enzyme catalyses Endonucleolytic cleavage to 5'-phosphomonoester.. In terms of biological role, endonuclease that specifically degrades the RNA of RNA-DNA hybrids. In Legionella pneumophila (strain Paris), this protein is Ribonuclease HII.